A 72-amino-acid polypeptide reads, in one-letter code: Phosphonoacetate hydrolase (72 aa).

Monomer. Unlike bacterial phosphonoacetate hydrolase, does not require zinc as a cofactor. serves as cofactor.

It carries out the reaction phosphonoacetate + H2O = acetate + phosphate + H(+). Unaffected by EDTA or Ca(2+), Co(2+), Cu(2+), Mg(2+), Mn(2+), Ni(2+) and Zn(2+). This Penicillium oxalicum protein is Phosphonoacetate hydrolase.